The sequence spans 318 residues: tRNA pseudouridine synthase B (318 aa).

D54 serves as the catalytic Nucleophile.

This sequence belongs to the pseudouridine synthase TruB family. Type 1 subfamily.

The catalysed reaction is uridine(55) in tRNA = pseudouridine(55) in tRNA. Its function is as follows. Responsible for synthesis of pseudouridine from uracil-55 in the psi GC loop of transfer RNAs. This Ralstonia pickettii (strain 12J) protein is tRNA pseudouridine synthase B.